The chain runs to 428 residues: Stromal membrane-associated protein 2 (428 aa).

The Arf-GAP domain maps to 13-139 (QAVLANLLLE…INVLRKEKDD (127 aa)). A C4-type zinc finger spans residues 28–51 (CADCQSKGPRWASWNIGVFICIRC). Phosphoserine occurs at positions 127, 219, 224, 230, and 239. The segment at 163–231 (MPQKKEDAQL…SVSRKAVGSM (69 aa)) is interaction with clathrin heavy chains. Residues 218-262 (PSPSSVSRKAVGSMPTAGSAGSVPENLNLFPEPGSKSEETGKKQL) form a disordered region. The segment covering 252 to 262 (SKSEETGKKQL) has biased composition (basic and acidic residues). The segment at 339–428 (MGGMQASMMG…NQTLSPQMWK (90 aa)) is interaction with PICALM.

In terms of assembly, interacts with ARF1. Interacts with PICALM and clathrin heavy chains.

It is found in the cytoplasm. In terms of biological role, GTPase activating protein that acts on ARF1. Can also activate ARF6 (in vitro). May play a role in clathrin-dependent retrograde transport from early endosomes to the trans-Golgi network. The polypeptide is Stromal membrane-associated protein 2 (Smap2) (Mus musculus (Mouse)).